The chain runs to 257 residues: Putative aldolase class 2 protein CC_1201 (257 aa).

Positions 114, 116, and 177 each coordinate Zn(2+).

The protein belongs to the aldolase class II family. Zn(2+) serves as cofactor.

The protein is Putative aldolase class 2 protein CC_1201 of Caulobacter vibrioides (strain ATCC 19089 / CIP 103742 / CB 15) (Caulobacter crescentus).